Here is a 177-residue protein sequence, read N- to C-terminus: MAPIKKRNQQNQPNINERIRFPKIRVVDADGTQLGIMAPSEAMEIADERNLDLVLVSDKADPPVCRVMDYGKFKFEQEKKAREAKKKQHTSDVKEVKMRYKIQTHDYEVRVNHAKRFLKSGDKVKATVTFRGREIQHSHLAEALLKKMANDLLDFAEIQQAPKREGRNMIMYLSPKK.

Belongs to the IF-3 family. In terms of assembly, monomer.

The protein resides in the cytoplasm. In terms of biological role, IF-3 binds to the 30S ribosomal subunit and shifts the equilibrium between 70S ribosomes and their 50S and 30S subunits in favor of the free subunits, thus enhancing the availability of 30S subunits on which protein synthesis initiation begins. The polypeptide is Translation initiation factor IF-3 (Acaryochloris marina (strain MBIC 11017)).